Reading from the N-terminus, the 535-residue chain is Glutamate--cysteine ligase (535 aa).

The protein belongs to the glutamate--cysteine ligase type 1 family. Type 1 subfamily.

It carries out the reaction L-cysteine + L-glutamate + ATP = gamma-L-glutamyl-L-cysteine + ADP + phosphate + H(+). The protein operates within sulfur metabolism; glutathione biosynthesis; glutathione from L-cysteine and L-glutamate: step 1/2. The chain is Glutamate--cysteine ligase from Pseudomonas syringae pv. syringae.